Here is a 332-residue protein sequence, read N- to C-terminus: Beta-ketoacyl-[acyl-carrier-protein] synthase III (332 aa).

Active-site residues include C112 and H252. The segment at 253 to 257 (QANLR) is ACP-binding. The active site involves N282.

It belongs to the thiolase-like superfamily. FabH family. Homodimer.

Its subcellular location is the cytoplasm. It catalyses the reaction malonyl-[ACP] + acetyl-CoA + H(+) = 3-oxobutanoyl-[ACP] + CO2 + CoA. Its pathway is lipid metabolism; fatty acid biosynthesis. Functionally, catalyzes the condensation reaction of fatty acid synthesis by the addition to an acyl acceptor of two carbons from malonyl-ACP. Catalyzes the first condensation reaction which initiates fatty acid synthesis and may therefore play a role in governing the total rate of fatty acid production. Possesses both acetoacetyl-ACP synthase and acetyl transacylase activities. Its substrate specificity determines the biosynthesis of branched-chain and/or straight-chain of fatty acids. In Syntrophomonas wolfei subsp. wolfei (strain DSM 2245B / Goettingen), this protein is Beta-ketoacyl-[acyl-carrier-protein] synthase III.